Here is a 297-residue protein sequence, read N- to C-terminus: Pyrroline-5-carboxylate reductase 1 (297 aa).

This sequence belongs to the pyrroline-5-carboxylate reductase family.

It is found in the cytoplasm. It carries out the reaction L-proline + NADP(+) = (S)-1-pyrroline-5-carboxylate + NADPH + 2 H(+). The catalysed reaction is L-proline + NAD(+) = (S)-1-pyrroline-5-carboxylate + NADH + 2 H(+). The protein operates within amino-acid biosynthesis; L-proline biosynthesis; L-proline from L-glutamate 5-semialdehyde: step 1/1. Functionally, catalyzes the reduction of 1-pyrroline-5-carboxylate (PCA) to L-proline. This chain is Pyrroline-5-carboxylate reductase 1 (proH), found in Bacillus spizizenii (strain ATCC 23059 / NRRL B-14472 / W23) (Bacillus subtilis subsp. spizizenii).